Here is a 310-residue protein sequence, read N- to C-terminus: Upstream stimulatory factor 1 (310 aa).

Positions 1–17 (MKGQQKTAETEEGTVQI) are enriched in polar residues. Disordered regions lie at residues 1 to 26 (MKGQQKTAETEEGTVQIQEGAVATGE) and 171 to 209 (QGGSQRSIAPRTHPYSPKSAAPRTTRDEKRRAQHNEVER). Positions 194–209 (TTRDEKRRAQHNEVER) are enriched in basic and acidic residues. Residues 199 to 254 (KRRAQHNEVERRRRDKINNWIVQLSKIIPDCSMESTKSGQSKGGILSKACDYIQEL) form the bHLH domain. The interval 271–292 (LQLDNDVLRQQVEDLKNKNLLL) is leucine-zipper. A Glycyl lysine isopeptide (Lys-Gly) (interchain with G-Cter in SUMO2) cross-link involves residue lysine 306.

As to quaternary structure, efficient DNA binding requires dimerization with another bHLH protein. Binds DNA as a homodimer or a heterodimer (USF1/USF2).

Its subcellular location is the nucleus. In terms of biological role, transcription factor that binds to a symmetrical DNA sequence (E-boxes) (5'-CACGTG-3') that is found in a variety of viral and cellular promoters. Regulates the expression of the surfactant protein-A (SP-A) gene. This chain is Upstream stimulatory factor 1 (USF1), found in Oryctolagus cuniculus (Rabbit).